Consider the following 161-residue polypeptide: Regulatory protein RecX (161 aa).

The protein belongs to the RecX family.

Its subcellular location is the cytoplasm. Modulates RecA activity. The polypeptide is Regulatory protein RecX (Thermotoga petrophila (strain ATCC BAA-488 / DSM 13995 / JCM 10881 / RKU-1)).